Consider the following 151-residue polypeptide: UPF0208 membrane protein Spro_3315 (151 aa).

Transmembrane regions (helical) follow at residues 46–64 (FAVRFMPPLAVFTLTWQIA) and 70–90 (GPAIATALFACSMPMQGLWWL).

Belongs to the UPF0208 family.

The protein resides in the cell inner membrane. The sequence is that of UPF0208 membrane protein Spro_3315 from Serratia proteamaculans (strain 568).